The chain runs to 284 residues: Diaminopimelate epimerase (284 aa).

Residues Asn-20, Gln-53, and Asn-73 each coordinate substrate. The Proton donor role is filled by Cys-82. Substrate-binding positions include 83–84, Asn-167, Asn-200, and 218–219; these read GN and ER. Catalysis depends on Cys-227, which acts as the Proton acceptor. 228–229 contributes to the substrate binding site; sequence GS.

It belongs to the diaminopimelate epimerase family. In terms of assembly, homodimer.

The protein resides in the cytoplasm. The catalysed reaction is (2S,6S)-2,6-diaminopimelate = meso-2,6-diaminopimelate. It functions in the pathway amino-acid biosynthesis; L-lysine biosynthesis via DAP pathway; DL-2,6-diaminopimelate from LL-2,6-diaminopimelate: step 1/1. Functionally, catalyzes the stereoinversion of LL-2,6-diaminopimelate (L,L-DAP) to meso-diaminopimelate (meso-DAP), a precursor of L-lysine and an essential component of the bacterial peptidoglycan. This chain is Diaminopimelate epimerase, found in Xanthomonas oryzae pv. oryzae (strain MAFF 311018).